A 383-amino-acid chain; its full sequence is Fructose-1,6-bisphosphate aldolase/phosphatase (383 aa).

The Proton acceptor; for FBP phosphatase activity role is filled by D11. Mg(2+) contacts are provided by D11, H18, D52, and D53. H18 serves as a coordination point for beta-D-fructose 1,6-bisphosphate. H18 is a dihydroxyacetone phosphate binding site. Residue Y90 coordinates beta-D-fructose 1,6-bisphosphate. Residue Q94 participates in Mg(2+) binding. Position 103-104 (103-104 (GN)) interacts with beta-D-fructose 1,6-bisphosphate. D131 is a Mg(2+) binding site. K132 is a binding site for beta-D-fructose 1,6-bisphosphate. K132 provides a ligand contact to dihydroxyacetone phosphate. Y228 (proton donor/acceptor; for FBP aldolase activity) is an active-site residue. Mg(2+) contacts are provided by K231, D232, and D233. K231 (schiff-base intermediate with DHAP; for FBP aldolase activity) is an active-site residue. Beta-D-fructose 1,6-bisphosphate contacts are provided by residues 241 to 242 (QH), R265, D286, and Y347. 2 residues coordinate dihydroxyacetone phosphate: R265 and D286. A disordered region spans residues 361 to 383 (FKKEEDVKKAKPSVYTSKDQGMD). Residues 374–383 (VYTSKDQGMD) are compositionally biased toward polar residues.

The protein belongs to the FBP aldolase/phosphatase family. Homooctamer; dimer of tetramers. The cofactor is Mg(2+).

It carries out the reaction beta-D-fructose 1,6-bisphosphate + H2O = beta-D-fructose 6-phosphate + phosphate. The enzyme catalyses beta-D-fructose 1,6-bisphosphate = D-glyceraldehyde 3-phosphate + dihydroxyacetone phosphate. It functions in the pathway carbohydrate biosynthesis; gluconeogenesis. Catalyzes two subsequent steps in gluconeogenesis: the aldol condensation of dihydroxyacetone phosphate (DHAP) and glyceraldehyde-3-phosphate (GA3P) to fructose-1,6-bisphosphate (FBP), and the dephosphorylation of FBP to fructose-6-phosphate (F6P). The sequence is that of Fructose-1,6-bisphosphate aldolase/phosphatase from Metallosphaera sedula (strain ATCC 51363 / DSM 5348 / JCM 9185 / NBRC 15509 / TH2).